The following is a 361-amino-acid chain: Phospho-N-acetylmuramoyl-pentapeptide-transferase (361 aa).

Transmembrane regions (helical) follow at residues Leu-28–Leu-48, Thr-74–Leu-94, Ile-99–Ala-119, Ser-133–Asp-153, Leu-168–Ser-188, Val-203–Ile-223, Thr-236–Phe-256, Val-263–Ile-283, Ile-288–Val-308, and Lys-338–Leu-358.

This sequence belongs to the glycosyltransferase 4 family. MraY subfamily. Requires Mg(2+) as cofactor.

The protein localises to the cell inner membrane. The catalysed reaction is UDP-N-acetyl-alpha-D-muramoyl-L-alanyl-gamma-D-glutamyl-meso-2,6-diaminopimeloyl-D-alanyl-D-alanine + di-trans,octa-cis-undecaprenyl phosphate = di-trans,octa-cis-undecaprenyl diphospho-N-acetyl-alpha-D-muramoyl-L-alanyl-D-glutamyl-meso-2,6-diaminopimeloyl-D-alanyl-D-alanine + UMP. Its pathway is cell wall biogenesis; peptidoglycan biosynthesis. Its function is as follows. Catalyzes the initial step of the lipid cycle reactions in the biosynthesis of the cell wall peptidoglycan: transfers peptidoglycan precursor phospho-MurNAc-pentapeptide from UDP-MurNAc-pentapeptide onto the lipid carrier undecaprenyl phosphate, yielding undecaprenyl-pyrophosphoryl-MurNAc-pentapeptide, known as lipid I. The sequence is that of Phospho-N-acetylmuramoyl-pentapeptide-transferase from Rickettsia akari (strain Hartford).